The primary structure comprises 76 residues: Esculentin-2-ALa (76 aa).

Positions 1–22 (MFTLKKSMLLLFFLGTISLSLC) are cleaved as a signal peptide. Positions 23–39 (EEERNADEDDGEKEVKR) are excised as a propeptide. A disulfide bridge connects residues cysteine 70 and cysteine 76.

Expressed by the skin glands.

It is found in the secreted. Antimicrobial peptide with activity against Gram-positive and Gram-negative bacteria and against fungi. Has been tested against S.aureus (MIC=2.5 ug/mL), B.pumilus (MIC=2.5 ug/mL), B.cereus (MIC=7.5 ug/mL), E.coli (MIC=12.5 ug/mL), B.dysenteriae (MIC=7.5 ug/mL), A.cacoaceticus (MIC=25.0 ug/mL), P.aeruginosa (MIC=50.0 ug/mL) and C.albicans (MIC=2.5 ug/mL). Also shows a weak hemolytic activity. In Amolops loloensis (Lolokou Sucker Frog), this protein is Esculentin-2-ALa.